A 377-amino-acid chain; its full sequence is Chaperone protein DnaJ (377 aa).

In terms of domain architecture, J spans 5–70 (DYYEVLGVSR…DKKAAYDQFG (66 aa)). Residues 133 to 211 (GLTKELRIPT…CHGDGRVEKS (79 aa)) form a CR-type zinc finger. Zn(2+) contacts are provided by C146, C149, C163, C166, C185, C188, C199, and C202. 4 CXXCXGXG motif repeats span residues 146–153 (CDLCEGSG), 163–170 (CGTCHGQG), 185–192 (CPTCHGRG), and 199–206 (CSKCHGDG).

Belongs to the DnaJ family. Homodimer. It depends on Zn(2+) as a cofactor.

It is found in the cytoplasm. Its function is as follows. Participates actively in the response to hyperosmotic and heat shock by preventing the aggregation of stress-denatured proteins and by disaggregating proteins, also in an autonomous, DnaK-independent fashion. Unfolded proteins bind initially to DnaJ; upon interaction with the DnaJ-bound protein, DnaK hydrolyzes its bound ATP, resulting in the formation of a stable complex. GrpE releases ADP from DnaK; ATP binding to DnaK triggers the release of the substrate protein, thus completing the reaction cycle. Several rounds of ATP-dependent interactions between DnaJ, DnaK and GrpE are required for fully efficient folding. Also involved, together with DnaK and GrpE, in the DNA replication of plasmids through activation of initiation proteins. This is Chaperone protein DnaJ from Shewanella baltica (strain OS195).